The following is a 315-amino-acid chain: Methionyl-tRNA formyltransferase (315 aa).

113–116 (SLLP) lines the (6S)-5,6,7,8-tetrahydrofolate pocket.

This sequence belongs to the Fmt family.

The catalysed reaction is L-methionyl-tRNA(fMet) + (6R)-10-formyltetrahydrofolate = N-formyl-L-methionyl-tRNA(fMet) + (6S)-5,6,7,8-tetrahydrofolate + H(+). In terms of biological role, attaches a formyl group to the free amino group of methionyl-tRNA(fMet). The formyl group appears to play a dual role in the initiator identity of N-formylmethionyl-tRNA by promoting its recognition by IF2 and preventing the misappropriation of this tRNA by the elongation apparatus. The polypeptide is Methionyl-tRNA formyltransferase (Klebsiella pneumoniae subsp. pneumoniae (strain ATCC 700721 / MGH 78578)).